Here is a 480-residue protein sequence, read N- to C-terminus: 3-isopropylmalate dehydratase large subunit (480 aa).

The [4Fe-4S] cluster site is built by Cys-357, Cys-417, and Cys-420. Over residues 431–441 (GQRCASTSNRN) the composition is skewed to polar residues. Residues 431 to 454 (GQRCASTSNRNFEGRQGKGGRTHL) form a disordered region.

The protein belongs to the aconitase/IPM isomerase family. LeuC type 1 subfamily. Heterodimer of LeuC and LeuD. It depends on [4Fe-4S] cluster as a cofactor.

It catalyses the reaction (2R,3S)-3-isopropylmalate = (2S)-2-isopropylmalate. Its pathway is amino-acid biosynthesis; L-leucine biosynthesis; L-leucine from 3-methyl-2-oxobutanoate: step 2/4. Its function is as follows. Catalyzes the isomerization between 2-isopropylmalate and 3-isopropylmalate, via the formation of 2-isopropylmaleate. The sequence is that of 3-isopropylmalate dehydratase large subunit from Mycobacteroides abscessus (strain ATCC 19977 / DSM 44196 / CCUG 20993 / CIP 104536 / JCM 13569 / NCTC 13031 / TMC 1543 / L948) (Mycobacterium abscessus).